The primary structure comprises 75 residues: Small ribosomal subunit protein bS18 (75 aa).

This sequence belongs to the bacterial ribosomal protein bS18 family. Part of the 30S ribosomal subunit. Forms a tight heterodimer with protein bS6.

Binds as a heterodimer with protein bS6 to the central domain of the 16S rRNA, where it helps stabilize the platform of the 30S subunit. This chain is Small ribosomal subunit protein bS18, found in Dinoroseobacter shibae (strain DSM 16493 / NCIMB 14021 / DFL 12).